Consider the following 509-residue polypeptide: Zinc metalloproteinase aureolysin (509 aa).

Positions Met1–Ala27 are cleaved as a signal peptide. Positions Ser28–Glu208 are excised as a propeptide. Residue Asp348 participates in Ca(2+) binding. Zn(2+) is bound at residue His352. Glu353 is a catalytic residue. His356 and Glu376 together coordinate Zn(2+). Residues Asp387, Glu389, Asp390, Leu392, Glu395, Tyr398, Thr399, Lys402, and Asp405 each coordinate Ca(2+). Residue His436 is the Proton donor of the active site.

The protein belongs to the peptidase M4 family. Monomer. Ca(2+) serves as cofactor. It depends on Zn(2+) as a cofactor.

It carries out the reaction Cleavage of insulin B chain with specificity similar to that of thermolysin, preferring hydrophobic P1' residues. Activates the glutamyl endopeptidase (EC 3.4.21.19) of Staphylococcus aureus.. Functionally, plays an essential role in immune evasion by helping bacteria to resist complement-mediated killing by neutrophils. Inhibits the deposition of host C3b on bacterial surfaces and the release of the chemoattractant C5a by cleaving the central complement protein C3. The cleavage site renders the C3b molecule vulnerable to proteolytic degradation by host regulators. Cleaves and inactivates host SERPINA1, which is an endogenous protease inhibitor essential for controlling neutrophil serine protease elastase. Also plays an essential role in the cleavage and subsequent activation of the serine protease SspA (glutamyl endopeptidase) which is involved in colonization and infection of human tissues. This is Zinc metalloproteinase aureolysin from Staphylococcus aureus.